Reading from the N-terminus, the 1028-residue chain is Formate dehydrogenase major subunit (1028 aa).

Positions 1–33 form a signal peptide, tat-type signal; the sequence is MQVSRRKFFKICAGGMAGTSAAMLGFAPANVLA. The 72-residue stretch at 43–114 folds into the 4Fe-4S Mo/W bis-MGD-type domain; that stretch reads AFESRNTCTY…GSLDYVNSES (72 aa). 4 residues coordinate [4Fe-4S] cluster: cysteine 50, cysteine 53, cysteine 57, and cysteine 100. Residue selenocysteine 204 is a non-standard amino acid, selenocysteine.

Belongs to the prokaryotic molybdopterin-containing oxidoreductase family. In terms of assembly, formate dehydrogenase is a membrane-bound complex, formed by subunits alpha, beta and gamma. Mo-bis(molybdopterin guanine dinucleotide) serves as cofactor. The cofactor is [4Fe-4S] cluster. In terms of processing, predicted to be exported by the Tat system. The position of the signal peptide cleavage has not been experimentally proven.

It is found in the periplasm. The catalysed reaction is formate + NAD(+) = CO2 + NADH. Allows to use formate as major electron donor during anaerobic respiration. Subunit alpha possibly forms the active site. This is Formate dehydrogenase major subunit (fdxG) from Haemophilus influenzae (strain ATCC 51907 / DSM 11121 / KW20 / Rd).